The sequence spans 431 residues: Adenylosuccinate synthetase (431 aa).

GTP contacts are provided by residues 12–18 (GDEGKGK) and 40–42 (GHT). D13 serves as the catalytic Proton acceptor. Mg(2+) contacts are provided by D13 and G40. IMP is bound by residues 13 to 16 (DEGK), 38 to 41 (NAGH), T130, R144, Q225, T240, and R304. H41 serves as the catalytic Proton donor. 300–306 (ATTGRPR) serves as a coordination point for substrate. Residues R306, 332-334 (KLD), and 414-416 (SVG) contribute to the GTP site.

Belongs to the adenylosuccinate synthetase family. As to quaternary structure, homodimer. Mg(2+) is required as a cofactor.

The protein resides in the cytoplasm. The catalysed reaction is IMP + L-aspartate + GTP = N(6)-(1,2-dicarboxyethyl)-AMP + GDP + phosphate + 2 H(+). It functions in the pathway purine metabolism; AMP biosynthesis via de novo pathway; AMP from IMP: step 1/2. Plays an important role in the de novo pathway of purine nucleotide biosynthesis. Catalyzes the first committed step in the biosynthesis of AMP from IMP. This is Adenylosuccinate synthetase from Geotalea uraniireducens (strain Rf4) (Geobacter uraniireducens).